A 54-amino-acid chain; its full sequence is Ovomucoid (54 aa).

In terms of domain architecture, Kazal-like spans 4-54; that stretch reads VDCSDYPKPVCTLEDMPLCGSDNITYHNKCYFCNAVAHSNGTLTFSHFGKC. 3 cysteine pairs are disulfide-bonded: cysteine 6–cysteine 36, cysteine 14–cysteine 33, and cysteine 22–cysteine 54. An N-linked (GlcNAc...) asparagine glycan is attached at asparagine 43.

The protein resides in the secreted. In Carpococcyx renauldi (Coral-billed ground-cuckoo), this protein is Ovomucoid.